We begin with the raw amino-acid sequence, 296 residues long: Nucleotide-binding protein SZO_12220 (296 aa).

13–20 serves as a coordination point for ATP; sequence GMSGAGKT. Residue 63 to 66 participates in GTP binding; that stretch reads DMRS.

The protein belongs to the RapZ-like family.

Functionally, displays ATPase and GTPase activities. This chain is Nucleotide-binding protein SZO_12220, found in Streptococcus equi subsp. zooepidemicus (strain H70).